Consider the following 167-residue polypeptide: UPF0225 protein VV1_2912 (167 aa).

It belongs to the UPF0225 family.

In Vibrio vulnificus (strain CMCP6), this protein is UPF0225 protein VV1_2912.